Reading from the N-terminus, the 211-residue chain is Probable transcription repressor protein RGM1 (211 aa).

Residues 6 to 11 carry the Nuclear localization signal motif; sequence PKRNKD. 2 C2H2-type zinc fingers span residues 19–44 and 50–73; these read YRCVGYPDCNMSFNRTEHLARHIRKH and FQCNICLKFFSRIDNLRQHQSSVH. The tract at residues 178–211 is disordered; sequence NIVELPPDSSDTPASPSKVQSFDQAKDASPNAKK. Low complexity predominate over residues 183–194; it reads PPDSSDTPASPS.

It localises to the nucleus. This Saccharomyces cerevisiae (strain ATCC 204508 / S288c) (Baker's yeast) protein is Probable transcription repressor protein RGM1 (RGM1).